An 81-amino-acid chain; its full sequence is PKYTIVDKETCIACGACGAAAPDIYDYDEDGIAYVTLDDNQGIVEVPDILIDDMMDAFEGCPTESIKVADEPFDGDPNKFD.

The 29-residue stretch at 2–30 folds into the 4Fe-4S ferredoxin-type domain; the sequence is KYTIVDKETCIACGACGAAAPDIYDYDED. Cys11, Cys14, Cys17, and Cys61 together coordinate [4Fe-4S] cluster.

[4Fe-4S] cluster serves as cofactor.

Functionally, ferredoxins are iron-sulfur proteins that transfer electrons in a wide variety of metabolic reactions. This chain is Ferredoxin (fer), found in Geobacillus stearothermophilus (Bacillus stearothermophilus).